The following is a 178-amino-acid chain: Ribosome maturation factor RimP (178 aa).

This sequence belongs to the RimP family.

It is found in the cytoplasm. Required for maturation of 30S ribosomal subunits. The polypeptide is Ribosome maturation factor RimP (Mycobacterium avium (strain 104)).